The following is a 200-amino-acid chain: Imidazoleglycerol-phosphate dehydratase (200 aa).

It belongs to the imidazoleglycerol-phosphate dehydratase family.

It localises to the cytoplasm. The catalysed reaction is D-erythro-1-(imidazol-4-yl)glycerol 3-phosphate = 3-(imidazol-4-yl)-2-oxopropyl phosphate + H2O. Its pathway is amino-acid biosynthesis; L-histidine biosynthesis; L-histidine from 5-phospho-alpha-D-ribose 1-diphosphate: step 6/9. The sequence is that of Imidazoleglycerol-phosphate dehydratase from Chlorobium luteolum (strain DSM 273 / BCRC 81028 / 2530) (Pelodictyon luteolum).